A 193-amino-acid chain; its full sequence is Probable nicotinate-nucleotide adenylyltransferase (193 aa).

The protein belongs to the NadD family.

The enzyme catalyses nicotinate beta-D-ribonucleotide + ATP + H(+) = deamido-NAD(+) + diphosphate. Its pathway is cofactor biosynthesis; NAD(+) biosynthesis; deamido-NAD(+) from nicotinate D-ribonucleotide: step 1/1. In terms of biological role, catalyzes the reversible adenylation of nicotinate mononucleotide (NaMN) to nicotinic acid adenine dinucleotide (NaAD). This is Probable nicotinate-nucleotide adenylyltransferase from Fusobacterium nucleatum subsp. nucleatum (strain ATCC 25586 / DSM 15643 / BCRC 10681 / CIP 101130 / JCM 8532 / KCTC 2640 / LMG 13131 / VPI 4355).